Reading from the N-terminus, the 788-residue chain is Protein translocase subunit SecA 2 (788 aa).

Residues Q86, 104–108, and D493 each bind ATP; that span reads GEGKT.

This sequence belongs to the SecA family. In terms of assembly, monomer and homodimer. Part of the essential Sec protein translocation apparatus which comprises SecA, SecYEG and auxiliary proteins SecDF. Other proteins may also be involved.

The protein localises to the cell membrane. It localises to the cytoplasm. The catalysed reaction is ATP + H2O + cellular proteinSide 1 = ADP + phosphate + cellular proteinSide 2.. In terms of biological role, part of the Sec protein translocase complex. Interacts with the SecYEG preprotein conducting channel. Has a central role in coupling the hydrolysis of ATP to the transfer of proteins into and across the cell membrane, serving as an ATP-driven molecular motor driving the stepwise translocation of polypeptide chains across the membrane. This is Protein translocase subunit SecA 2 from Bacillus cereus (strain ZK / E33L).